A 968-amino-acid chain; its full sequence is Alanine--tRNA ligase, cytoplasmic (968 aa).

At methionine 1 the chain carries N-acetylmethionine. Phosphoserine is present on serine 3. Lysine 19 carries the N6-acetyllysine modification. Residues arginine 77, histidine 95, tryptophan 176, and 214 to 216 (IWN) contribute to the ATP site. Residues asparagine 216 and aspartate 239 each coordinate L-alanine. Glycine 243 is an ATP binding site. A phosphoserine mark is found at serine 399 and serine 555. The Zn(2+) site is built by histidine 605, histidine 609, cysteine 723, and histidine 727. The short motif at 750–763 (RRIVAVTGAEAQKA) is the Nuclear localization signal element. At lysine 876 the chain carries N6-acetyllysine. At lysine 943 the chain carries N6,N6,N6-trimethyllysine; alternate. Lysine 943 is subject to N6,N6-dimethyllysine; alternate. N6-methyllysine; alternate is present on lysine 943.

This sequence belongs to the class-II aminoacyl-tRNA synthetase family. In terms of assembly, monomer. Interacts with ANKRD16; the interaction is direct. Requires Zn(2+) as cofactor. Post-translationally, ISGylated. In terms of processing, methylation at 'Lys-943' by METTL21C.

It localises to the cytoplasm. The protein resides in the nucleus. It catalyses the reaction tRNA(Ala) + L-alanine + ATP = L-alanyl-tRNA(Ala) + AMP + diphosphate. The enzyme catalyses (S)-lactate + ATP + H(+) = (S)-lactoyl-AMP + diphosphate. The catalysed reaction is (S)-lactoyl-AMP + L-lysyl-[protein] = N(6)-[(S)-lactoyl]-L-lysyl-[protein] + AMP + 2 H(+). The protein lactyltransferase activity is inhibited by beta-alanine. Its function is as follows. Catalyzes the attachment of alanine to tRNA(Ala) in a two-step reaction: alanine is first activated by ATP to form Ala-AMP and then transferred to the acceptor end of tRNA(Ala). Also edits incorrectly charged tRNA(Ala) via its editing domain. In presence of high levels of lactate, also acts as a protein lactyltransferase that mediates lactylation of lysine residues in target proteins, such as TEAD1, TP53/p53 and YAP1. Protein lactylation takes place in a two-step reaction: lactate is first activated by ATP to form lactate-AMP and then transferred to lysine residues of target proteins. Acts as an inhibitor of TP53/p53 activity by catalyzing lactylation of TP53/p53. Acts as a positive regulator of the Hippo pathway by mediating lactylation of TEAD1 and YAP1. The protein is Alanine--tRNA ligase, cytoplasmic (Aars1) of Rattus norvegicus (Rat).